The following is a 1892-amino-acid chain: Protein TIC 214 (1892 aa).

The next 6 membrane-spanning stretches (helical) occupy residues 18–38 (IINS…FSIG), 64–84 (FITG…HLAL), 87–107 (PHTI…WNNH), 124–144 (LSIQ…HFIL), 172–192 (VGWL…LVWI), and 221–241 (IFSI…PSPI). Disordered stretches follow at residues 250–300 (SKTE…EGWD), 794–814 (REEQ…ENKR), and 1581–1609 (RIQE…LGPV). Over residues 256–268 (VESEEEKDVEIET) the composition is skewed to acidic residues. Basic and acidic residues predominate over residues 1581 to 1602 (RIQEEKEPASQGEKERGSDIEN).

This sequence belongs to the TIC214 family. In terms of assembly, part of the Tic complex.

It is found in the plastid. It localises to the chloroplast inner membrane. Its function is as follows. Involved in protein precursor import into chloroplasts. May be part of an intermediate translocation complex acting as a protein-conducting channel at the inner envelope. This chain is Protein TIC 214, found in Nicotiana tomentosiformis (Tobacco).